Consider the following 290-residue polypeptide: Ribosomal RNA small subunit methyltransferase A (290 aa).

N27, L29, G54, E75, D100, and N125 together coordinate S-adenosyl-L-methionine.

It belongs to the class I-like SAM-binding methyltransferase superfamily. rRNA adenine N(6)-methyltransferase family. RsmA subfamily.

The protein localises to the cytoplasm. The enzyme catalyses adenosine(1518)/adenosine(1519) in 16S rRNA + 4 S-adenosyl-L-methionine = N(6)-dimethyladenosine(1518)/N(6)-dimethyladenosine(1519) in 16S rRNA + 4 S-adenosyl-L-homocysteine + 4 H(+). In terms of biological role, specifically dimethylates two adjacent adenosines (A1518 and A1519) in the loop of a conserved hairpin near the 3'-end of 16S rRNA in the 30S particle. May play a critical role in biogenesis of 30S subunits. The chain is Ribosomal RNA small subunit methyltransferase A from Streptococcus sanguinis (strain SK36).